We begin with the raw amino-acid sequence, 543 residues long: Chaperonin GroEL (543 aa).

Residues 31 to 34, 88 to 92, Gly-415, 479 to 481, and Asp-495 contribute to the ATP site; these read TMGP, DGTTT, and DAL.

Belongs to the chaperonin (HSP60) family. In terms of assembly, forms a cylinder of 14 subunits composed of two heptameric rings stacked back-to-back. Interacts with the co-chaperonin GroES.

It is found in the cytoplasm. The enzyme catalyses ATP + H2O + a folded polypeptide = ADP + phosphate + an unfolded polypeptide.. Functionally, together with its co-chaperonin GroES, plays an essential role in assisting protein folding. The GroEL-GroES system forms a nano-cage that allows encapsulation of the non-native substrate proteins and provides a physical environment optimized to promote and accelerate protein folding. The polypeptide is Chaperonin GroEL (Clostridium tetani (strain Massachusetts / E88)).